Here is a 264-residue protein sequence, read N- to C-terminus: Thymidylate synthase (264 aa).

Residue arginine 21 coordinates dUMP. Histidine 51 contacts (6R)-5,10-methylene-5,6,7,8-tetrahydrofolate. 126–127 (RR) is a dUMP binding site. Cysteine 146 functions as the Nucleophile in the catalytic mechanism. DUMP-binding positions include 166 to 169 (RSAD), asparagine 177, and 207 to 209 (HLY). Aspartate 169 contributes to the (6R)-5,10-methylene-5,6,7,8-tetrahydrofolate binding site. Alanine 263 contributes to the (6R)-5,10-methylene-5,6,7,8-tetrahydrofolate binding site.

The protein belongs to the thymidylate synthase family. Bacterial-type ThyA subfamily. Homodimer.

The protein resides in the cytoplasm. The catalysed reaction is dUMP + (6R)-5,10-methylene-5,6,7,8-tetrahydrofolate = 7,8-dihydrofolate + dTMP. The protein operates within pyrimidine metabolism; dTTP biosynthesis. Catalyzes the reductive methylation of 2'-deoxyuridine-5'-monophosphate (dUMP) to 2'-deoxythymidine-5'-monophosphate (dTMP) while utilizing 5,10-methylenetetrahydrofolate (mTHF) as the methyl donor and reductant in the reaction, yielding dihydrofolate (DHF) as a by-product. This enzymatic reaction provides an intracellular de novo source of dTMP, an essential precursor for DNA biosynthesis. The sequence is that of Thymidylate synthase from Rhodopirellula baltica (strain DSM 10527 / NCIMB 13988 / SH1).